The chain runs to 114 residues: rRNA-processing protein cgrA (114 aa).

The segment at 1 to 96 (MSASESAPSA…YDKMAEKMHR (96 aa)) is disordered. The stretch at 40–101 (AKRLEARKHQ…EKMHRKRVER (62 aa)) forms a coiled coil. The segment covering 41 to 93 (KRLEARKHQEAVKEHERELKEEKEAERQAHIQRIKDRRAAKEEKERYDKMAEK) has biased composition (basic and acidic residues).

Belongs to the CGR1 family.

It localises to the nucleus. It is found in the nucleolus. Functionally, involved in nucleolar integrity and required for processing of the pre-rRNA for the 60S ribosome subunit. This Aspergillus terreus (strain NIH 2624 / FGSC A1156) protein is rRNA-processing protein cgrA (cgrA).